Consider the following 434-residue polypeptide: Enolase (434 aa).

Residue glutamine 165 participates in (2R)-2-phosphoglycerate binding. The active-site Proton donor is the glutamate 207. Aspartate 244, glutamate 291, and aspartate 318 together coordinate Mg(2+). (2R)-2-phosphoglycerate is bound by residues lysine 343, arginine 372, serine 373, and lysine 394. The Proton acceptor role is filled by lysine 343.

This sequence belongs to the enolase family. It depends on Mg(2+) as a cofactor.

Its subcellular location is the cytoplasm. It is found in the secreted. The protein resides in the cell surface. It catalyses the reaction (2R)-2-phosphoglycerate = phosphoenolpyruvate + H2O. It participates in carbohydrate degradation; glycolysis; pyruvate from D-glyceraldehyde 3-phosphate: step 4/5. In terms of biological role, catalyzes the reversible conversion of 2-phosphoglycerate (2-PG) into phosphoenolpyruvate (PEP). It is essential for the degradation of carbohydrates via glycolysis. The protein is Enolase of Macrococcus caseolyticus (strain JCSC5402) (Macrococcoides caseolyticum).